A 259-amino-acid chain; its full sequence is UPF0739 protein C1orf74 homolog (259 aa).

Belongs to the UPF0739 family.

This is UPF0739 protein C1orf74 homolog from Danio rerio (Zebrafish).